Here is a 515-residue protein sequence, read N- to C-terminus: Maturase K (515 aa).

Belongs to the intron maturase 2 family. MatK subfamily.

The protein resides in the plastid. Its subcellular location is the chloroplast. Its function is as follows. Usually encoded in the trnK tRNA gene intron. Probably assists in splicing its own and other chloroplast group II introns. The protein is Maturase K of Pinus luchuensis (Ryukyu island pine).